We begin with the raw amino-acid sequence, 299 residues long: MNKDNVKLAIAPIGWTNDDMPELGSENTFQQIVSEMALAGFTGSEVGSKYPRDPAVLKPMLDIRGIQICNAWFSTFFANGQREKTIDEFVNHMNFLHAMGANVIGCSEQSGSIQGLDKPILGDAKPCFSEEEWQRVAEGYNTLGRLAAEKGMQVCLHHHMGTGIQTTAEIDKFMSLVDERVFLLFDTGHAWYSEGGEAPMLAILKKYLPRINHVHLKDVRPPVIDQVRRDGLSFLDGVKKGTFTVPGDGVIDFRPVFKLLDDFGYKGWMVVEAEQDPALANPFEYAVKARKYIRETAGI.

Belongs to the IolE/MocC family. Glutathione serves as cofactor. It depends on Co(2+) as a cofactor. Mn(2+) is required as a cofactor.

The catalysed reaction is scyllo-inosose = 3D-3,5/4-trihydroxycyclohexane-1,2-dione + H2O. In terms of biological role, catalyzes the dehydration of inosose (2-keto-myo-inositol, 2KMI or 2,4,6/3,5-pentahydroxycyclohexanone) to 3D-(3,5/4)-trihydroxycyclohexane-1,2-dione (D-2,3-diketo-4-deoxy-epi-inositol). This Klebsiella pneumoniae (strain 342) protein is Inosose dehydratase.